Reading from the N-terminus, the 64-residue chain is Palmitoyl-CoA hydrolase (64 aa).

This sequence belongs to the type-B carboxylesterase/lipase family. Monomer and homotrimer.

Its subcellular location is the microsome. It localises to the endoplasmic reticulum. It carries out the reaction hexadecanoyl-CoA + H2O = hexadecanoate + CoA + H(+). Its function is as follows. Hydrolysis of a variety of CoA thioesters of long-chain fatty acids. This chain is Palmitoyl-CoA hydrolase, found in Rattus norvegicus (Rat).